Reading from the N-terminus, the 233-residue chain is Ribose-5-phosphate isomerase A (233 aa).

Residues 28–31 (SGST), 83–86 (DGAD), and 96–99 (KGGG) each bind substrate. E105 functions as the Proton acceptor in the catalytic mechanism. K123 contacts substrate.

This sequence belongs to the ribose 5-phosphate isomerase family. In terms of assembly, homodimer.

It carries out the reaction aldehydo-D-ribose 5-phosphate = D-ribulose 5-phosphate. It functions in the pathway carbohydrate degradation; pentose phosphate pathway; D-ribose 5-phosphate from D-ribulose 5-phosphate (non-oxidative stage): step 1/1. In terms of biological role, catalyzes the reversible conversion of ribose-5-phosphate to ribulose 5-phosphate. This chain is Ribose-5-phosphate isomerase A, found in Maricaulis maris (strain MCS10) (Caulobacter maris).